We begin with the raw amino-acid sequence, 126 residues long: Defensin-like protein 183 (126 aa).

Residues 1-26 (MEKALSLVVFIIFSIMLASVENKVNA) form the signal peptide. 8 disulfide bridges follow: C29/C68, C36/C55, C39/C62, C43/C64, C80/C126, C91/C111, C96/C120, and C100/C122.

This sequence belongs to the DEFL family.

The protein localises to the secreted. This chain is Defensin-like protein 183 (LCR19), found in Arabidopsis thaliana (Mouse-ear cress).